Reading from the N-terminus, the 162-residue chain is Xanthine-guanine phosphoribosyltransferase (162 aa).

5-phospho-alpha-D-ribose 1-diphosphate contacts are provided by residues Arg-43 to Gly-44 and Asp-94 to Thr-102. Asp-95 contacts Mg(2+). The guanine site is built by Asp-98 and Ile-141. Xanthine is bound by residues Asp-98 and Ile-141. GMP-binding positions include Asp-98–Thr-102 and Trp-140–Ile-141.

It belongs to the purine/pyrimidine phosphoribosyltransferase family. XGPT subfamily. Homotetramer. Mg(2+) is required as a cofactor.

It is found in the cell inner membrane. The enzyme catalyses GMP + diphosphate = guanine + 5-phospho-alpha-D-ribose 1-diphosphate. It catalyses the reaction XMP + diphosphate = xanthine + 5-phospho-alpha-D-ribose 1-diphosphate. It carries out the reaction IMP + diphosphate = hypoxanthine + 5-phospho-alpha-D-ribose 1-diphosphate. The protein operates within purine metabolism; GMP biosynthesis via salvage pathway; GMP from guanine: step 1/1. Its pathway is purine metabolism; XMP biosynthesis via salvage pathway; XMP from xanthine: step 1/1. In terms of biological role, purine salvage pathway enzyme that catalyzes the transfer of the ribosyl-5-phosphate group from 5-phospho-alpha-D-ribose 1-diphosphate (PRPP) to the N9 position of the 6-oxopurines guanine and xanthine to form the corresponding ribonucleotides GMP (guanosine 5'-monophosphate) and XMP (xanthosine 5'-monophosphate), with the release of PPi. To a lesser extent, also acts on hypoxanthine. In Oleidesulfovibrio alaskensis (strain ATCC BAA-1058 / DSM 17464 / G20) (Desulfovibrio alaskensis), this protein is Xanthine-guanine phosphoribosyltransferase.